We begin with the raw amino-acid sequence, 310 residues long: GPN-loop GTPase 2 (310 aa).

Ala2 carries the post-translational modification N-acetylalanine. 19-24 (GSGKTT) contacts GTP. The Gly-Pro-Asn (GPN)-loop; involved in dimer interface motif lies at 76 to 78 (GPN). 178-181 (SKMD) contributes to the GTP binding site.

Belongs to the GPN-loop GTPase family. As to quaternary structure, heterodimers with GPN1 or GPN3. Binds to RNA polymerase II (RNAPII).

Functionally, small GTPase required for proper localization of RNA polymerase II and III (RNAPII and RNAPIII). May act at an RNAP assembly step prior to nuclear import. In Sus scrofa (Pig), this protein is GPN-loop GTPase 2.